A 345-amino-acid chain; its full sequence is Nuclear distribution protein nudE-like 1 (345 aa).

Positions 28–190 form a coiled coil; it reads QSFQEARDEL…LAVRERQQEV (163 aa). Positions 56 to 166 are self-association; it reads VQAEQRNRDL…LDEKESLLVS (111 aa). An interaction with KATNB1 region spans residues 64–189; the sequence is DLQADNQRLK…ELAVRERQQE (126 aa). The segment at 114-133 is required for interaction with PAFAH1B1; it reads YVRELEQANDDLERAKRATI. The interaction with CENPF stretch occupies residues 175–345; that stretch reads RDLRQELAVR…SAPGMLPLSV (171 aa). Residues 189 to 256 form an interaction with YWHAE region; it reads EVTRKSAPSS…SARISALNIV (68 aa). The segment at 191–345 is interaction with NEFL; the sequence is TRKSAPSSPT…SAPGMLPLSV (155 aa). Residues 195–256 are interaction with KATNA1; the sequence is APSSPTLDCE…SARISALNIV (62 aa). Position 215 is a phosphoserine (Ser215). A Phosphothreonine; by CDK1 and MAPK1 modification is found at Thr219. Position 231 is a phosphoserine (Ser231). The tract at residues 241–280 is interaction with DISC1; it reads TSPLTPSARISALNIVGDLLRKVGALESKLAACRNFAKDQ. Ser242 carries the phosphoserine; by CDK1 modification. Thr245 carries the phosphothreonine; by CDK1 and MAPK1 modification. The interval 256-291 is required for localization to the centrosome and interaction with dynein, dynactin, tubulin gamma, PCM1 and PCNT; the sequence is VGDLLRKVGALESKLAACRNFAKDQASRKSYISGNV. Residue Cys273 is the site of S-palmitoyl cysteine; by ZDHHC2, ZDHHC3 and ZDHHC7 attachment. The segment at 315-345 is disordered; the sequence is GAVNGFDPAPPPPGLGSSRPSSAPGMLPLSV. Residues 329–339 show a composition bias toward low complexity; sequence LGSSRPSSAPG. The residue at position 344 (Ser344) is a Phosphoserine.

The protein belongs to the nudE family. As to quaternary structure, interacts with PLEKHM1 (via N- and C-terminus). Interacts with YWHAE. Interacts directly with NEFL and indirectly with NEFH. Interacts with microtubules. Self-associates. Interacts with DISC1, dynein, dynactin, tubulin gamma, KATNA1, KATNB1, PAFAH1B1, PCM1 and PCNT. Interacts (via C-terminus) with CENPF. Interacts with ZNF365. Interacts with GTP-bound RAB9A; the interaction may lead to RAB9A-dynein motor tethering. In terms of processing, phosphorylated in mitosis. Can be phosphorylated by CDK1, CDK5 and MAPK1. Phosphorylation by CDK5 promotes interaction with KATNA1 and YWHAE. Post-translationally, palmitoylation at Cys-273 reduces affinity for dynein. As to expression, expressed in brain, heart, kidney, liver, lung, pancreas, placenta and skeletal muscle.

Its subcellular location is the cytoplasm. It localises to the cytoskeleton. It is found in the microtubule organizing center. The protein resides in the centrosome. The protein localises to the chromosome. Its subcellular location is the centromere. It localises to the kinetochore. It is found in the spindle. In terms of biological role, required for organization of the cellular microtubule array and microtubule anchoring at the centrosome. May regulate microtubule organization at least in part by targeting the microtubule severing protein KATNA1 to the centrosome. Also positively regulates the activity of the minus-end directed microtubule motor protein dynein. May enhance dynein-mediated microtubule sliding by targeting dynein to the microtubule plus ends. Required for several dynein- and microtubule-dependent processes such as the maintenance of Golgi integrity, the centripetal motion of secretory vesicles and the coupling of the nucleus and centrosome. Also required during brain development for the migration of newly formed neurons from the ventricular/subventricular zone toward the cortical plate. Plays a role, together with DISC1, in the regulation of neurite outgrowth. Required for mitosis in some cell types but appears to be dispensible for mitosis in cortical neuronal progenitors, which instead requires NDE1. Facilitates the polymerization of neurofilaments from the individual subunits NEFH and NEFL. Positively regulates lysosome peripheral distribution and ruffled border formation in osteoclasts. Plays a role, together with DISC1, in the regulation of neurite outgrowth. May act as a RAB9A/B effector that tethers RAB9-associated late endosomes to the dynein motor for their retrograde transport to the trans-Golgi network. The chain is Nuclear distribution protein nudE-like 1 (NDEL1) from Homo sapiens (Human).